A 153-amino-acid polypeptide reads, in one-letter code: Nucleoside diphosphate kinase (153 aa).

ATP-binding residues include Lys-9, Phe-57, Arg-85, Thr-91, Arg-102, and Asn-112. His-115 serves as the catalytic Pros-phosphohistidine intermediate.

Belongs to the NDK family. Homotetramer. Mg(2+) is required as a cofactor.

The protein resides in the cytoplasm. The enzyme catalyses a 2'-deoxyribonucleoside 5'-diphosphate + ATP = a 2'-deoxyribonucleoside 5'-triphosphate + ADP. The catalysed reaction is a ribonucleoside 5'-diphosphate + ATP = a ribonucleoside 5'-triphosphate + ADP. Functionally, major role in the synthesis of nucleoside triphosphates other than ATP. The ATP gamma phosphate is transferred to the NDP beta phosphate via a ping-pong mechanism, using a phosphorylated active-site intermediate. This Parabacteroides distasonis (strain ATCC 8503 / DSM 20701 / CIP 104284 / JCM 5825 / NCTC 11152) protein is Nucleoside diphosphate kinase.